Reading from the N-terminus, the 103-residue chain is Alpha-ketoglutarate dehydrogenase component 4 (103 aa).

Met-1 carries the post-translational modification N-acetylmethionine. Residue Lys-5 is modified to N6-succinyllysine. The disordered stretch occupies residues 20–69 (TPLIRFPDRRDNPKPNVSEALRSAGLPSHSSVISQHSKGSKSPDLLMYQG). Over residues 47 to 56 (SHSSVISQHS) the composition is skewed to polar residues. Phosphoserine occurs at positions 49, 61, and 90.

It belongs to the alpha-ketoglutarate dehydrogenase component 4 family. In terms of assembly, component of the 2-oxoglutarate dehydrogenase complex (OGDHC), composed of OGDH (2-oxoglutarate dehydrogenase; also called E1 subunit), DLST (dihydrolipoamide succinyltransferase; also called E2 subunit) and DLD (dihydrolipoamide dehydrogenase; also called E3 subunit), and the assembly factor KGD4. Within OGDHC complex, interacts (via N-terminus) with E3 subunit and (via C-terminus) with E2 subunit.

It localises to the mitochondrion. Functionally, molecular adapter that is necessary to form a stable 2-oxoglutarate dehydrogenase enzyme complex (OGDHC). Enables the specific recruitment of E3 subunit to E2 subunit in the 2-oxoglutarate dehydrogenase complex (OGDHC). This chain is Alpha-ketoglutarate dehydrogenase component 4, found in Homo sapiens (Human).